A 178-amino-acid polypeptide reads, in one-letter code: Large ribosomal subunit protein uL6 (178 aa).

Belongs to the universal ribosomal protein uL6 family. In terms of assembly, part of the 50S ribosomal subunit.

Functionally, this protein binds to the 23S rRNA, and is important in its secondary structure. It is located near the subunit interface in the base of the L7/L12 stalk, and near the tRNA binding site of the peptidyltransferase center. This is Large ribosomal subunit protein uL6 from Tropheryma whipplei (strain TW08/27) (Whipple's bacillus).